A 137-amino-acid polypeptide reads, in one-letter code: Nucleoside diphosphate kinase (137 aa).

ATP contacts are provided by lysine 9, phenylalanine 57, arginine 85, threonine 91, arginine 102, and asparagine 112. The active-site Pros-phosphohistidine intermediate is the histidine 115.

The protein belongs to the NDK family. In terms of assembly, homotetramer. Mg(2+) serves as cofactor.

The protein resides in the cytoplasm. It carries out the reaction a 2'-deoxyribonucleoside 5'-diphosphate + ATP = a 2'-deoxyribonucleoside 5'-triphosphate + ADP. The enzyme catalyses a ribonucleoside 5'-diphosphate + ATP = a ribonucleoside 5'-triphosphate + ADP. Its function is as follows. Major role in the synthesis of nucleoside triphosphates other than ATP. The ATP gamma phosphate is transferred to the NDP beta phosphate via a ping-pong mechanism, using a phosphorylated active-site intermediate. The chain is Nucleoside diphosphate kinase from Geobacter sulfurreducens (strain ATCC 51573 / DSM 12127 / PCA).